Consider the following 584-residue polypeptide: ATP-dependent lipid A-core flippase (584 aa).

5 helical membrane passes run 15 to 35 (LLGYLLGYWKVLLLSMLSMAV), 63 to 83 (IMWVPLAIIGIYLIRGLAGFI), 153 to 173 (LGMLGLMLTTDWQLTLICLVV), 251 to 271 (TGVTQLMIACALAAILYFAGL), and 277 to 297 (GLTAGDFMVFLTAMLGLFAPV). One can recognise an ABC transmembrane type-1 domain in the interval 27–309 (LLSMLSMAVA…ISSVSQAMQR (283 aa)). The ABC transporter domain occupies 341-576 (LSFDAVSFAY…GGLYARLHSL (236 aa)). Residue 375 to 382 (GSSGSGKT) coordinates ATP.

Belongs to the ABC transporter superfamily. Lipid exporter (TC 3.A.1.106) family. Homodimer.

The protein localises to the cell inner membrane. The enzyme catalyses ATP + H2O + lipid A-core oligosaccharideSide 1 = ADP + phosphate + lipid A-core oligosaccharideSide 2.. Functionally, involved in lipopolysaccharide (LPS) biosynthesis. Translocates lipid A-core from the inner to the outer leaflet of the inner membrane. Transmembrane domains (TMD) form a pore in the inner membrane and the ATP-binding domain (NBD) is responsible for energy generation. This is ATP-dependent lipid A-core flippase from Chromobacterium violaceum (strain ATCC 12472 / DSM 30191 / JCM 1249 / CCUG 213 / NBRC 12614 / NCIMB 9131 / NCTC 9757 / MK).